We begin with the raw amino-acid sequence, 209 residues long: Claudin-like protein ZF-A9 (209 aa).

Transmembrane regions (helical) follow at residues 8 to 28 (LGTTLGTLGWLGIIISCAIPL), 81 to 101 (AILVISAIVGLIAMFASFAGG), 114 to 134 (ALVATTGGVAFIIAGILGLVP), and 159 to 179 (FGAAIFICWGAAVLLVIGGGL). The interval 187–209 (GRTSSRGRYTPASQNGRERSEYV) is disordered. Positions 188-201 (RTSSRGRYTPASQN) are enriched in polar residues.

Belongs to the claudin family.

The protein localises to the cell membrane. It is found in the cell junction. Its subcellular location is the tight junction. In terms of biological role, component of tight junction (TJ) strands. The protein is Claudin-like protein ZF-A9 (cldng) of Danio rerio (Zebrafish).